A 356-amino-acid chain; its full sequence is Leucine carboxyl methyltransferase 1 (356 aa).

Residues arginine 78, glycine 101, aspartate 127, 183–184 (DL), and glutamate 218 contribute to the S-adenosyl-L-methionine site.

It belongs to the methyltransferase superfamily. LCMT family.

It carries out the reaction [phosphatase 2A protein]-C-terminal L-leucine + S-adenosyl-L-methionine = [phosphatase 2A protein]-C-terminal L-leucine methyl ester + S-adenosyl-L-homocysteine. Its function is as follows. Methylates the carboxyl group of the C-terminal leucine residue of protein phosphatase 2A catalytic subunits to form alpha-leucine ester residues. In Cryptococcus neoformans var. neoformans serotype D (strain JEC21 / ATCC MYA-565) (Filobasidiella neoformans), this protein is Leucine carboxyl methyltransferase 1 (PPM1).